A 289-amino-acid chain; its full sequence is Nodulation protein NolT (289 aa).

The N-terminal stretch at 1–33 is a signal peptide; that stretch reads MFGSAHGDTTSSDTSGRRPLRLVVLPLLLALSS. The N-palmitoyl cysteine moiety is linked to residue Cys34. Cys34 carries S-diacylglycerol cysteine lipidation. A helical membrane pass occupies residues 233–253; sequence VAVGVSAAVFAVTCYLLFIVL.

Belongs to the YscJ lipoprotein family.

The protein localises to the cell outer membrane. The polypeptide is Nodulation protein NolT (nolT) (Sinorhizobium fredii (strain NBRC 101917 / NGR234)).